A 198-amino-acid polypeptide reads, in one-letter code: Ribonuclease HII (198 aa).

One can recognise an RNase H type-2 domain in the interval 10–198; that stretch reads QLVAGVDEVG…PVKRALGLAS (189 aa). Residues Asp16, Glu17, and Asp108 each coordinate a divalent metal cation.

This sequence belongs to the RNase HII family. The cofactor is Mn(2+). Mg(2+) serves as cofactor.

It localises to the cytoplasm. The enzyme catalyses Endonucleolytic cleavage to 5'-phosphomonoester.. In terms of biological role, endonuclease that specifically degrades the RNA of RNA-DNA hybrids. This is Ribonuclease HII from Escherichia fergusonii (strain ATCC 35469 / DSM 13698 / CCUG 18766 / IAM 14443 / JCM 21226 / LMG 7866 / NBRC 102419 / NCTC 12128 / CDC 0568-73).